The following is a 656-amino-acid chain: tRNA 5-methylaminomethyl-2-thiouridine biosynthesis bifunctional protein MnmC (656 aa).

Residues 1 to 236 (MTDPLIPAVL…KRAMLVGRFA (236 aa)) form a tRNA (mnm(5)s(2)U34)-methyltransferase region. The segment at 260-656 (IGTGLAGCAV…LRALRQGTVS (397 aa)) is FAD-dependent cmnm(5)s(2)U34 oxidoreductase.

The protein in the N-terminal section; belongs to the methyltransferase superfamily. tRNA (mnm(5)s(2)U34)-methyltransferase family. In the C-terminal section; belongs to the DAO family. The cofactor is FAD.

The protein localises to the cytoplasm. The enzyme catalyses 5-aminomethyl-2-thiouridine(34) in tRNA + S-adenosyl-L-methionine = 5-methylaminomethyl-2-thiouridine(34) in tRNA + S-adenosyl-L-homocysteine + H(+). In terms of biological role, catalyzes the last two steps in the biosynthesis of 5-methylaminomethyl-2-thiouridine (mnm(5)s(2)U) at the wobble position (U34) in tRNA. Catalyzes the FAD-dependent demodification of cmnm(5)s(2)U34 to nm(5)s(2)U34, followed by the transfer of a methyl group from S-adenosyl-L-methionine to nm(5)s(2)U34, to form mnm(5)s(2)U34. The polypeptide is tRNA 5-methylaminomethyl-2-thiouridine biosynthesis bifunctional protein MnmC (Paraburkholderia xenovorans (strain LB400)).